The primary structure comprises 621 residues: Protein CASP (621 aa).

Over 1–574 the chain is Cytoplasmic; that stretch reads MEIVSRAWES…ILATPKSRTV (574 aa). 2 coiled-coil regions span residues 101–445 and 473–525; these read LLKG…VQDI and ILTS…FLQS. A helical; Anchor for type IV membrane protein membrane pass occupies residues 575 to 595; that stretch reads FFSYLLILHALIMLVLYKFAF. Over 596–621 the chain is Lumenal; the sequence is DQSVVRDAETECEYKFHQHMLDNHKQ.

The protein belongs to the CASP family.

The protein resides in the golgi apparatus membrane. Functionally, may be involved in intra-Golgi retrograde transport. The protein is Protein CASP (ceh-44) of Caenorhabditis elegans.